The chain runs to 368 residues: Quinolinate synthase (368 aa).

Residues histidine 46 and serine 63 each coordinate iminosuccinate. Residue cysteine 110 participates in [4Fe-4S] cluster binding. Iminosuccinate is bound by residues 141-143 (YVN) and serine 162. Position 230 (cysteine 230) interacts with [4Fe-4S] cluster. Residues 256 to 258 (HPE) and threonine 273 each bind iminosuccinate. Cysteine 320 contacts [4Fe-4S] cluster.

It belongs to the quinolinate synthase family. Type 3 subfamily. [4Fe-4S] cluster serves as cofactor.

The protein localises to the cytoplasm. It catalyses the reaction iminosuccinate + dihydroxyacetone phosphate = quinolinate + phosphate + 2 H2O + H(+). Its pathway is cofactor biosynthesis; NAD(+) biosynthesis; quinolinate from iminoaspartate: step 1/1. Catalyzes the condensation of iminoaspartate with dihydroxyacetone phosphate to form quinolinate. This is Quinolinate synthase from Bacillus thuringiensis (strain Al Hakam).